A 146-amino-acid chain; its full sequence is 3-dehydroquinate dehydratase (146 aa).

Tyr24 acts as the Proton acceptor in catalysis. The substrate site is built by Asn73, His79, and Asp86. His99 functions as the Proton donor in the catalytic mechanism. Substrate contacts are provided by residues 100–101 (LS) and Arg110.

This sequence belongs to the type-II 3-dehydroquinase family. As to quaternary structure, homododecamer.

The enzyme catalyses 3-dehydroquinate = 3-dehydroshikimate + H2O. Its pathway is metabolic intermediate biosynthesis; chorismate biosynthesis; chorismate from D-erythrose 4-phosphate and phosphoenolpyruvate: step 3/7. Functionally, catalyzes a trans-dehydration via an enolate intermediate. The chain is 3-dehydroquinate dehydratase from Shewanella baltica (strain OS223).